The sequence spans 435 residues: Eukaryotic translation initiation factor 3 subunit E (435 aa).

A PCI domain is found at 219-392 (FFNHPKGRDL…GHVVMGTQPL (174 aa)).

Belongs to the eIF-3 subunit E family. In terms of assembly, component of the eukaryotic translation initiation factor 3 (eIF-3) complex. The eIF-3 complex interacts with pix. Interacts with mxt. Expression levels in females and males are relatively similar 10 days after oviposition, however by day 15 expression is higher in gravid females than in males (at protein level).

The protein localises to the cytoplasm. The protein resides in the microsome. It is found in the endoplasmic reticulum. Functionally, component of the eukaryotic translation initiation factor 3 (eIF-3) complex, which is involved in protein synthesis of a specialized repertoire of mRNAs and, together with other initiation factors, stimulates binding of mRNA and methionyl-tRNAi to the 40S ribosome. The eIF-3 complex specifically targets and initiates translation of a subset of mRNAs involved in cell proliferation. In addition to its role in the eIF-3 complex, also functions in protein ubiquitination and degradation. During mitosis required for regulating mitotic microtubule growth and kinetochore formation, and consequently is required for satisfying the spindle assembly checkpoint (SAC) during metaphase to prevent delays in mitotic progression. This is likely by promoting the ubiquitination and degradation of Klp67A, a kinesin-like protein that suppresses microtubule polymerization at plus ends. Acts in the COP9 signalosome (CSN) mediated regulation of cullin neddylation by promoting Cul1 and Cul3 neddylation and negatively regulating the CSN complex subunit CSN5. The polypeptide is Eukaryotic translation initiation factor 3 subunit E (Drosophila melanogaster (Fruit fly)).